The sequence spans 44 residues: 2S seed storage albumin protein (44 aa).

Intrachain disulfides connect C7–C42 and C19–C31.

The protein belongs to the 2S seed storage albumins family. The mature protein consists of a small and a large chain linked by 2 disulfide bonds.

Its function is as follows. This is a 2S seed storage protein. Has antifungal activity. Inhibits spore germination in H.sativum (IC(50)=62.5 ug/ml) and P.betae (IC(50)=62.5 ug/ml). Inhibits growth of H.sativum, V.albo-atrum and P.infestans. The sequence is that of 2S seed storage albumin protein from Taraxacum officinale (Common dandelion).